Here is an 833-residue protein sequence, read N- to C-terminus: Glycerol-3-phosphate acyltransferase (833 aa).

The HXXXXD motif signature appears at C309–I314.

It belongs to the GPAT/DAPAT family.

The protein resides in the cell inner membrane. It carries out the reaction sn-glycerol 3-phosphate + an acyl-CoA = a 1-acyl-sn-glycero-3-phosphate + CoA. It functions in the pathway phospholipid metabolism; CDP-diacylglycerol biosynthesis; CDP-diacylglycerol from sn-glycerol 3-phosphate: step 1/3. The protein is Glycerol-3-phosphate acyltransferase of Pseudomonas syringae pv. syringae (strain B728a).